A 551-amino-acid polypeptide reads, in one-letter code: HTH-type transcriptional regulator SgrR (551 aa).

Positions 1–116 (MPSARLQQQF…LVSHLGRSFR (116 aa)) constitute an HTH marR-type domain. The segment at residues 26-49 (LNELAALLSCSRRHMRTLLNTMQD) is a DNA-binding region (H-T-H motif). The interval 163–492 (ELEADIAHHW…IDWQADAARW (330 aa)) is solute-binding.

Functionally, activates the small RNA gene sgrS under glucose-phosphate stress conditions as well as yfdZ. Represses its own transcription under both stress and non-stress conditions. Might act as a sensor of the intracellular accumulation of phosphoglucose by binding these molecules in its C-terminal solute-binding domain. This Escherichia coli O1:K1 / APEC protein is HTH-type transcriptional regulator SgrR.